A 308-amino-acid chain; its full sequence is Glutaminase (308 aa).

Residues Ser66, Asn117, Glu161, Asn168, Tyr192, Tyr244, and Val262 each coordinate substrate.

Belongs to the glutaminase family. Homotetramer.

The catalysed reaction is L-glutamine + H2O = L-glutamate + NH4(+). The chain is Glutaminase from Klebsiella pneumoniae subsp. pneumoniae (strain ATCC 700721 / MGH 78578).